We begin with the raw amino-acid sequence, 130 residues long: Small ribosomal subunit protein eS6 (130 aa).

The interval 78 to 98 is disordered; it reads SGPPGFRPERKGERRRKTVRG.

Belongs to the eukaryotic ribosomal protein eS6 family.

The protein is Small ribosomal subunit protein eS6 of Methanopyrus kandleri (strain AV19 / DSM 6324 / JCM 9639 / NBRC 100938).